The sequence spans 410 residues: Arginine deiminase (410 aa).

Cysteine 400 (amidino-cysteine intermediate) is an active-site residue.

Belongs to the arginine deiminase family.

Its subcellular location is the cytoplasm. It catalyses the reaction L-arginine + H2O = L-citrulline + NH4(+). The protein operates within amino-acid degradation; L-arginine degradation via ADI pathway; carbamoyl phosphate from L-arginine: step 1/2. In Lactococcus lactis subsp. lactis (strain IL1403) (Streptococcus lactis), this protein is Arginine deiminase (arcA).